We begin with the raw amino-acid sequence, 159 residues long: Phosphopantetheine adenylyltransferase (159 aa).

Position 16 (histidine 16) interacts with ATP. Substrate is bound by residues lysine 40, methionine 72, and arginine 86. ATP contacts are provided by residues 87–89 (GLR), glutamate 97, and 122–128 (YQYLSAS).

The protein belongs to the bacterial CoaD family. Homohexamer. Requires Mg(2+) as cofactor.

The protein resides in the cytoplasm. The enzyme catalyses (R)-4'-phosphopantetheine + ATP + H(+) = 3'-dephospho-CoA + diphosphate. It functions in the pathway cofactor biosynthesis; coenzyme A biosynthesis; CoA from (R)-pantothenate: step 4/5. Functionally, reversibly transfers an adenylyl group from ATP to 4'-phosphopantetheine, yielding dephospho-CoA (dPCoA) and pyrophosphate. In Dehalococcoides mccartyi (strain ATCC BAA-2266 / KCTC 15142 / 195) (Dehalococcoides ethenogenes (strain 195)), this protein is Phosphopantetheine adenylyltransferase.